We begin with the raw amino-acid sequence, 311 residues long: MNQTNKGEGQTAPQKESMGQILWQLTRPHTLTASFVPVLLGTVLAMFYVKVDLLLFLAMLFSCLWIQIATNLFNEYYDFKRGLDTAESVGIGGAIVRHGMKPKTILQLALASYGIAILLGVYICASSSWWLALIGLVGMAIGYLYTGGPLPIAYTPFGELFSGICMGSVFVLISFFIQTDKINMQSILISIPIAILVGAINLSNNIRDIEEDKKGGRKTLAILMGHKGAVTLLAASFAVAYIWVVGLVITGAASPWLFVVFLSVPKPVQAVKGFVQNEMPMNMIVAMKSTAQTNTFFGFLLSIGLLISYFR.

9 helical membrane passes run leucine 31–valine 51, leucine 53–phenylalanine 73, threonine 104–serine 126, leucine 131–alanine 153, phenylalanine 157–isoleucine 177, isoleucine 182–leucine 202, leucine 220–alanine 240, isoleucine 242–leucine 262, and threonine 290–phenylalanine 310.

Belongs to the MenA family. Type 1 subfamily.

The protein localises to the cell membrane. It carries out the reaction an all-trans-polyprenyl diphosphate + 1,4-dihydroxy-2-naphthoate + H(+) = a 2-demethylmenaquinol + CO2 + diphosphate. Its pathway is quinol/quinone metabolism; menaquinone biosynthesis; menaquinol from 1,4-dihydroxy-2-naphthoate: step 1/2. Functionally, conversion of 1,4-dihydroxy-2-naphthoate (DHNA) to demethylmenaquinone (DMK). The polypeptide is 1,4-dihydroxy-2-naphthoate octaprenyltransferase (Bacillus subtilis (strain 168)).